The chain runs to 357 residues: NADH-quinone oxidoreductase subunit H (357 aa).

A run of 8 helical transmembrane segments spans residues 20 to 40 (WLLV…MGCV), 92 to 112 (ALFV…WAVI), 127 to 147 (LLFV…AGWA), 165 to 185 (ISYE…SGSL), 203 to 223 (GLTF…IYII), 259 to 279 (FFLA…LMFL), 294 to 314 (IPGW…FIWF), and 329 to 349 (LGWK…AIWM).

The protein belongs to the complex I subunit 1 family. As to quaternary structure, NDH-1 is composed of 14 different subunits. Subunits NuoA, H, J, K, L, M, N constitute the membrane sector of the complex.

It is found in the cell inner membrane. The catalysed reaction is a quinone + NADH + 5 H(+)(in) = a quinol + NAD(+) + 4 H(+)(out). Functionally, NDH-1 shuttles electrons from NADH, via FMN and iron-sulfur (Fe-S) centers, to quinones in the respiratory chain. The immediate electron acceptor for the enzyme in this species is believed to be ubiquinone. Couples the redox reaction to proton translocation (for every two electrons transferred, four hydrogen ions are translocated across the cytoplasmic membrane), and thus conserves the redox energy in a proton gradient. This subunit may bind ubiquinone. The protein is NADH-quinone oxidoreductase subunit H of Herminiimonas arsenicoxydans.